We begin with the raw amino-acid sequence, 427 residues long: cAMP-dependent protein kinase regulatory subunit (427 aa).

A dimerization and phosphorylation region spans residues 38–184; sequence QFCSNFFIRK…RIKVSISNNF (147 aa). A disordered region spans residues 96-145; the sequence is TTHMGHPNDHGALHDDDDDPLEDEDDEEFDKFSTEPLPSLPPTNYNRGRR. Residues 110-124 show a composition bias toward acidic residues; that stretch reads DDDDDPLEDEDDEEF. The residue at position 147 (Ser147) is a Phosphoserine. Residues 185-300, Glu250, Arg259, 303-422, Glu372, and Arg381 contribute to the 3',5'-cyclic AMP site; these read LFRN…FLSE and LLKS…YHAV.

The protein belongs to the cAMP-dependent kinase regulatory chain family. Tetramer, composed of 2 regulatory (R) and 2 catalytic (C) subunits. In the presence of cAMP it dissociates into 2 active monomeric C subunits and an R dimer.

This is cAMP-dependent protein kinase regulatory subunit (pkar) from Mucor circinelloides f. lusitanicus (Mucor racemosus var. lusitanicus).